The chain runs to 123 residues: Antitoxin RnlB (123 aa).

Can form a complex with cognate toxin RnlA. Post-translationally, probably degraded by CplXP and Lon proteases.

Antitoxin component of a type II toxin-antitoxin (TA) system. A labile antitoxin (half-life of 2.1 minutes) that inhibits the endonuclease activity of cognate toxin RnlA but not that of non-cognate toxin LsoA. The chain is Antitoxin RnlB (rnlB) from Escherichia coli (strain K12).